Reading from the N-terminus, the 137-residue chain is ATP synthase epsilon chain (137 aa).

This sequence belongs to the ATPase epsilon chain family. As to quaternary structure, F-type ATPases have 2 components, CF(1) - the catalytic core - and CF(0) - the membrane proton channel. CF(1) has five subunits: alpha(3), beta(3), gamma(1), delta(1), epsilon(1). CF(0) has three main subunits: a, b and c.

It is found in the cellular thylakoid membrane. Its function is as follows. Produces ATP from ADP in the presence of a proton gradient across the membrane. This is ATP synthase epsilon chain from Trichodesmium erythraeum (strain IMS101).